A 195-amino-acid chain; its full sequence is Thioredoxin reductase-like selenoprotein T (195 aa).

The N-terminal stretch at 1–19 (MRLLLLLLVAASAVVRSEA) is a signal peptide. Positions 46–49 (CVSU) form a cross-link, cysteinyl-selenocysteine (Cys-Sec). A non-standard amino acid (selenocysteine) is located at residue Sec-49. The chain crosses the membrane as a helical span at residues 85 to 103 (IASFLSVFKLVLIGLIIVG).

This sequence belongs to the SelWTH family. Selenoprotein T subfamily. May contain a selenide-sulfide bond between Cys-46 and Sec-49. This bond is speculated to serve as redox-active pair. In terms of tissue distribution, ubiquitous. Highly expressed in the endocrine pancreas. Expressed at low levels in the adult brain.

The protein localises to the endoplasmic reticulum membrane. It catalyses the reaction [thioredoxin]-dithiol + NADP(+) = [thioredoxin]-disulfide + NADPH + H(+). In terms of biological role, selenoprotein with thioredoxin reductase-like oxidoreductase activity. Protects dopaminergic neurons against oxidative stress and cell death. Involved in ADCYAP1/PACAP-induced calcium mobilization and neuroendocrine secretion. Plays a role in fibroblast anchorage and redox regulation. In gastric smooth muscle, modulates the contraction processes through the regulation of calcium release and MYLK activation. In pancreatic islets, involved in the control of glucose homeostasis, contributes to prolonged ADCYAP1/PACAP-induced insulin secretion. The protein is Thioredoxin reductase-like selenoprotein T of Mus musculus (Mouse).